A 953-amino-acid polypeptide reads, in one-letter code: Nonsense-mediated mRNA decay factor SMG8 (953 aa).

Disordered regions lie at residues 571-604 (AEDAELDPDEEDEELPTGEREEQHITQSNGCSQP) and 629-653 (PCFDQSSSSEAESTCSGTSSEESNT). The span at 573–586 (DAELDPDEEDEELP) shows a compositional bias: acidic residues. The span at 595–604 (ITQSNGCSQP) shows a compositional bias: polar residues. The span at 634–653 (SSSSEAESTCSGTSSEESNT) shows a compositional bias: low complexity.

It belongs to the SMG8 family.

In terms of biological role, involved in nonsense-mediated decay (NMD) of mRNAs containing premature stop codons. Probable component of kinase complex containing nonC and recruited to stalled ribosomes. The chain is Nonsense-mediated mRNA decay factor SMG8 from Drosophila pseudoobscura pseudoobscura (Fruit fly).